The primary structure comprises 875 residues: DNA gyrase subunit A (875 aa).

Residues 34 to 533 (LPDVRDGLKP…NSADINLEDL (500 aa)) enclose the Topo IIA-type catalytic domain. The active-site O-(5'-phospho-DNA)-tyrosine intermediate is the tyrosine 122. Positions 560-566 (QRRGGKG) match the GyrA-box motif. The interval 841–875 (EPVDEEDLDTIDGSAAEGDDEIAPEVDVDDEPEEE) is disordered. The segment covering 857 to 875 (EGDDEIAPEVDVDDEPEEE) has biased composition (acidic residues).

Belongs to the type II topoisomerase GyrA/ParC subunit family. In terms of assembly, heterotetramer, composed of two GyrA and two GyrB chains. In the heterotetramer, GyrA contains the active site tyrosine that forms a transient covalent intermediate with DNA, while GyrB binds cofactors and catalyzes ATP hydrolysis.

Its subcellular location is the cytoplasm. The catalysed reaction is ATP-dependent breakage, passage and rejoining of double-stranded DNA.. Its function is as follows. A type II topoisomerase that negatively supercoils closed circular double-stranded (ds) DNA in an ATP-dependent manner to modulate DNA topology and maintain chromosomes in an underwound state. Negative supercoiling favors strand separation, and DNA replication, transcription, recombination and repair, all of which involve strand separation. Also able to catalyze the interconversion of other topological isomers of dsDNA rings, including catenanes and knotted rings. Type II topoisomerases break and join 2 DNA strands simultaneously in an ATP-dependent manner. The chain is DNA gyrase subunit A from Shigella flexneri.